We begin with the raw amino-acid sequence, 988 residues long: MSTPGIGGDFQLFSPLESTRRISQGNSLSVDQSSTDVASQDWTQWMRWDDEQAFPETANASPSSPFDLAFISPSASSGREASDAMHKDFSPDISLDFKSPSLGFFPGGDLNTNVSPQPDHVGAGSLSVHSNSPLSSIGASRKRKTGSDDDGSTMTSMFKAKQAPSKKRAHNVIEKRYRANLNEKIAELRDSVPSLRASYKQANGNSGDDDDDGVTSASKLNKASILSKATEYIRHLEIRNKRLEEENTALKIRLRQLDKAADQIVTSAASVSSPSDCTVSTESGASSSPSVFSHAEDVPSDHSPTSSHPPEGLIKVPDAWKRMRAAGSNESPYSQSYIQYKKTDSHSSQSGGGRMRSHLPNKYMLGALAGLMVLEGLGTEKKTESTAKGLLAVPLNLLNRVQLPSEVYSSAAFQYFWSSWHARAISHFLMLAILVVGSAFIVFVYLFNSDPRRQYSASKVAPDVTLSSCNFRRQAWLTSIQRVGVPRHRFFHEWYVVTSRCFEYVLRCLLGWKLYSLVTGVTEEDEKGRVKTWDIAIDAQLAGGDAEISKSRLVLTIFAAGTLPRSPMRMMLKALHCRILMWRVGEPGSWTFNVSNDVARSLARYQWDLARKMNAALPKDHPDSLPSHLATLLKIDCDDVMIDTIIQRAANLTWNRPTQEGTDDDEALLDVVEEDPAIQSSLDALAAWWSSHLLQGALLRYFEASSGGPDAKKSRNVFKSKIKLALDVAPQPSAAHTRALVMMAVFFERDRVANIGSVLAALPKEKGKNKQNQASNFLDSSLPISVREEISTAVRCAMIAAIFNARATGDTSLPATFTVEKAIHWFNRLPLDPVELTLLEFAAVYHLLHILASDIDYLASSDSSAPPSPMSKASDMLSSSSDDGEDGASQRNNNIIPHPMPNLGRVASELIYWARNAYNPAFYGFTSNLVKVIETECTSLCQTAGVHVADYSCVQEEKSKAKQAIDSKRRFAGGNEEASDNLLLSDES.

At 1 to 427 (MSTPGIGGDF…SSWHARAISH (427 aa)) the chain is on the cytoplasmic side. 2 disordered regions span residues 53–85 (AFPETANASPSSPFDLAFISPSASSGREASDAM) and 108–169 (GDLN…KKRA). The segment covering 125 to 136 (SLSVHSNSPLSS) has biased composition (low complexity). The basic motif stretch occupies residues 165–178 (SKKRAHNVIEKRYR). The region spanning 165–236 (SKKRAHNVIE…SKATEYIRHL (72 aa)) is the bHLH domain. The segment at 179–236 (ANLNEKIAELRDSVPSLRASYKQANGNSGDDDDDGVTSASKLNKASILSKATEYIRHL) is helix-loop-helix motif. The stretch at 226–260 (LSKATEYIRHLEIRNKRLEEENTALKIRLRQLDKA) forms a coiled coil. Residues 267-291 (SAASVSSPSDCTVSTESGASSSPSV) show a composition bias toward polar residues. The interval 267-313 (SAASVSSPSDCTVSTESGASSSPSVFSHAEDVPSDHSPTSSHPPEGL) is disordered. Low complexity predominate over residues 301–310 (DHSPTSSHPP). Residues 428–447 (FLMLAILVVGSAFIVFVYLF) form a helical membrane-spanning segment. Topologically, residues 448–988 (NSDPRRQYSA…SDNLLLSDES (541 aa)) are lumenal. The span at 866 to 881 (PPSPMSKASDMLSSSS) shows a compositional bias: low complexity. A disordered region spans residues 866–900 (PPSPMSKASDMLSSSSDDGEDGASQRNNNIIPHPM).

In terms of processing, in low oxygen or sterol conditions, undergoes proteolytic cleavage by rhomboid-type protease rbdB and is released as soluble transcription factor from the membrane.

It is found in the endoplasmic reticulum membrane. Its subcellular location is the nucleus. In terms of biological role, precursor of the transcription factor srbA, which is embedded in the endoplasmic reticulum membrane. Low oxygen or sterol conditions promote processing of this form, releasing the transcription factor form that translocates into the nucleus and activates transcription of genes required for adaptation to anaerobic growth. Transcription factor that regulates sterol biosynthesis and hyphal morphology. Plays a critical role in ergosterol biosynthesis, resistance to the azole class of antifungal drugs, and in maintenance of cell polarity. Directly binds erg11A/cyp51A upstream DNA sequence at tandem repeats, called TR34 and TR46, that produce duplicated binding sites. Also mediates regulation of iron acquisition in response to hypoxia and low iron conditions via activation of extra- and intracellular siderophore production. Positively regulates the expression of the other hypoxia adaptation key transcription factor srbB. Required for the azole-sensing and response to azole stress. Binds the high-affinity sites 5'-A-T-C-G/A-T/G-A/G-C/T-G/C-A-T-3' of target promoters. Required for virulence in murine models of invasive pulmonary aspergillosis (IPA). This is Transcription regulator srbA precursor from Aspergillus fumigatus (strain ATCC MYA-4609 / CBS 101355 / FGSC A1100 / Af293) (Neosartorya fumigata).